The primary structure comprises 340 residues: Glyceraldehyde-3-phosphate dehydrogenase (340 aa).

NAD(+) contacts are provided by residues 11–12 (SI) and Gly111. D-glyceraldehyde 3-phosphate is bound at residue 140 to 142 (SCN). Cys141 acts as the Nucleophile in catalysis. Arg169 is a binding site for NAD(+). Residue 195–196 (HG) participates in D-glyceraldehyde 3-phosphate binding. Gln303 is a binding site for NAD(+).

The protein belongs to the glyceraldehyde-3-phosphate dehydrogenase family. Homotetramer.

The protein resides in the cytoplasm. It carries out the reaction D-glyceraldehyde 3-phosphate + phosphate + NADP(+) = (2R)-3-phospho-glyceroyl phosphate + NADPH + H(+). The catalysed reaction is D-glyceraldehyde 3-phosphate + phosphate + NAD(+) = (2R)-3-phospho-glyceroyl phosphate + NADH + H(+). Its pathway is carbohydrate degradation; glycolysis; pyruvate from D-glyceraldehyde 3-phosphate: step 1/5. In Methanococcus vannielii (strain ATCC 35089 / DSM 1224 / JCM 13029 / OCM 148 / SB), this protein is Glyceraldehyde-3-phosphate dehydrogenase.